We begin with the raw amino-acid sequence, 21 residues long: Fibrinogen beta chain (21 aa).

Acidic residues predominate over residues 1 to 11 (EFPTDYDEGED). Positions 1–21 (EFPTDYDEGEDDRPKVGLGAR) are disordered. A Sulfotyrosine modification is found at Tyr-6.

Heterohexamer; disulfide linked. Contains 2 sets of 3 non-identical chains (alpha, beta and gamma). The 2 heterotrimers are in head to head conformation with the N-termini in a small central domain. Conversion of fibrinogen to fibrin is triggered by thrombin, which cleaves fibrinopeptides A and B from alpha and beta chains, and thus exposes the N-terminal polymerization sites responsible for the formation of the soft clot.

Its subcellular location is the secreted. Its function is as follows. Cleaved by the protease thrombin to yield monomers which, together with fibrinogen alpha (FGA) and fibrinogen gamma (FGG), polymerize to form an insoluble fibrin matrix. Fibrin has a major function in hemostasis as one of the primary components of blood clots. In addition, functions during the early stages of wound repair to stabilize the lesion and guide cell migration during re-epithelialization. Was originally thought to be essential for platelet aggregation, based on in vitro studies using anticoagulated blood. However subsequent studies have shown that it is not absolutely required for thrombus formation in vivo. Enhances expression of SELP in activated platelets. Maternal fibrinogen is essential for successful pregnancy. Fibrin deposition is also associated with infection, where it protects against IFNG-mediated hemorrhage. May also facilitate the antibacterial immune response via both innate and T-cell mediated pathways. The protein is Fibrinogen beta chain (FGB) of Bison bonasus (European bison).